The chain runs to 144 residues: Large ribosomal subunit protein uL13 (144 aa).

It belongs to the universal ribosomal protein uL13 family. Part of the 50S ribosomal subunit.

Functionally, this protein is one of the early assembly proteins of the 50S ribosomal subunit, although it is not seen to bind rRNA by itself. It is important during the early stages of 50S assembly. This is Large ribosomal subunit protein uL13 from Mycoplasmopsis pulmonis (strain UAB CTIP) (Mycoplasma pulmonis).